We begin with the raw amino-acid sequence, 400 residues long: Acetate kinase (400 aa).

Position 10 (N10) interacts with Mg(2+). An ATP-binding site is contributed by K17. A substrate-binding site is contributed by R89. Residue D148 is the Proton donor/acceptor of the active site. ATP-binding positions include 208-212 (HLGNG), 283-285 (DCR), and 331-335 (GIGEN). E385 is a binding site for Mg(2+).

This sequence belongs to the acetokinase family. As to quaternary structure, homodimer. Mg(2+) is required as a cofactor. It depends on Mn(2+) as a cofactor.

Its subcellular location is the cytoplasm. The catalysed reaction is acetate + ATP = acetyl phosphate + ADP. The protein operates within metabolic intermediate biosynthesis; acetyl-CoA biosynthesis; acetyl-CoA from acetate: step 1/2. Its function is as follows. Catalyzes the formation of acetyl phosphate from acetate and ATP. Can also catalyze the reverse reaction. This is Acetate kinase from Haemophilus ducreyi (strain 35000HP / ATCC 700724).